Here is a 250-residue protein sequence, read N- to C-terminus: Kv channel-interacting protein 4 (250 aa).

Positions 2 to 44 are KIS; the sequence is NVRRVESISAQLEEASSTGGFLYAQNNTKRSIKERLMKLLPCS. 2 positions are modified to phosphoserine: S17 and S56. The 57-residue stretch at 61–117 folds into the EF-hand 1; degenerate domain; that stretch reads LEMATVRHRPEALELLEAQSKFTKKELQILYRGFKNECPSGVVNEETFKEIYSQFFP. 3 EF-hand domains span residues 120–155, 156–191, and 204–239; these read DSTT…LLRG, TVQE…IYDM, and APRQ…DENI. Ca(2+) is bound by residues D133, D135, N137, D144, D169, N171, D173, Y175, E180, D217, N219, D221, and E228. Positions 237-250 are interaction with KCND2; that stretch reads ENIMRSMQLFENVI.

Belongs to the recoverin family. In terms of assembly, component of heteromultimeric potassium channels. Identified in potassium channel complexes containing KCND1, KCND2, KCND3, KCNIP1, KCNIP2, KCNIP3, KCNIP4, DPP6 and DPP10. Interacts with the C-terminus of PSEN2 and probably PSEN1. Interacts with KCND2 and KCND3. In terms of tissue distribution, expressed in brain. Highly expressed by neurons in layers II-IV of cortex and in hippocampus, thalamus and the Purkinje cell layer of the cerebellum.

It localises to the cell membrane. The protein localises to the cytoplasm. Its subcellular location is the peroxisome. Functionally, regulatory subunit of Kv4/D (Shal)-type voltage-gated rapidly inactivating A-type potassium channels, such as KCND2/Kv4.2 and KCND3/Kv4.3. Modulates channel expression at the cell membrane, gating characteristics, inactivation kinetics and rate of recovery from inactivation in a calcium-dependent and isoform-specific manner. The polypeptide is Kv channel-interacting protein 4 (Kcnip4) (Mus musculus (Mouse)).